Here is a 326-residue protein sequence, read N- to C-terminus: Phosphate acyltransferase (326 aa).

This sequence belongs to the PlsX family. Homodimer. Probably interacts with PlsY.

It localises to the cytoplasm. The enzyme catalyses a fatty acyl-[ACP] + phosphate = an acyl phosphate + holo-[ACP]. The protein operates within lipid metabolism; phospholipid metabolism. Catalyzes the reversible formation of acyl-phosphate (acyl-PO(4)) from acyl-[acyl-carrier-protein] (acyl-ACP). This enzyme utilizes acyl-ACP as fatty acyl donor, but not acyl-CoA. The polypeptide is Phosphate acyltransferase (Macrococcus caseolyticus (strain JCSC5402) (Macrococcoides caseolyticum)).